The chain runs to 773 residues: Ribosomal protein S6 kinase alpha-4 (773 aa).

Residues 33–301 form the Protein kinase 1 domain; the sequence is FALLKVLGTG…AQEVKSHPFF (269 aa). Residues 39-47 and K65 contribute to the ATP site; that span reads LGTGAYGKV. D161 functions as the Proton acceptor in the catalytic mechanism. S196 is modified (phosphoserine; by autocatalysis). Positions 302-371 constitute an AGC-kinase C-terminal domain; sequence QGLDWVALAA…VAPSILFDHN (70 aa). The residue at position 343 (S343) is a Phosphoserine; by MAPK1, MAPK3 and MAPK14. A Phosphoserine modification is found at S347. Residues S360 and S365 each carry the phosphoserine; by autocatalysis modification. Residues 417 to 425 and K440 each bind ATP; that span reads LGQGSFSVC. The Protein kinase 2 domain maps to 417 to 674; it reads LGQGSFSVCR…LEGLRSSSWL (258 aa). The active-site Proton acceptor is the D530. At T542 the chain carries Phosphothreonine. Position 568 is a phosphothreonine; by MAPK1, MAPK3 and MAPK14 (T568). Residues S634 and S678 each carry the phosphoserine modification. 2 disordered regions span residues 674-696 and 728-773; these read LQDG…SSGP and AKRR…LSPS. Position 687 is a phosphothreonine (T687). Phosphoserine; by autocatalysis occurs at positions 737 and 745.

This sequence belongs to the protein kinase superfamily. AGC Ser/Thr protein kinase family. S6 kinase subfamily. In terms of assembly, forms a complex with either MAPK1/ERK2 or MAPK3/ERK1 in quiescent cells which transiently dissociates following mitogenic stimulation. Also associates with MAPK14/p38-alpha. Activated RPS6KA4 associates with and phosphorylates the NF-kappa-B p65 subunit RELA. Requires Mg(2+) as cofactor. Post-translationally, ser-343 and Thr-568 phosphorylation is required for kinase activity. Ser-343 and Ser-196 are autophosphorylated by the C-terminal kinase domain, and their phosphorylation is essential for the catalytic activity of the N-terminal kinase domain. Phosphorylated at Ser-343, Thr-568 and Thr-687 by MAPK1/ERK2, MAPK3/ERK1 and MAPK14/p38-alpha. Autophosphorylated at Ser-737 and Ser-745 by the N-terminal kinase domain.

It localises to the nucleus. It catalyses the reaction L-seryl-[protein] + ATP = O-phospho-L-seryl-[protein] + ADP + H(+). It carries out the reaction L-threonyl-[protein] + ATP = O-phospho-L-threonyl-[protein] + ADP + H(+). Its activity is regulated as follows. Activated by phosphorylation at Ser-343, Thr-568 and Thr-687 by MAPK1/ERK2, MAPK3/ERK1 and MAPK14/p38-alpha, and by further autophosphorylation of Ser-196, Ser-360 and Ser-365 by the activated C-terminal kinase domain. Its function is as follows. Serine/threonine-protein kinase that is required for the mitogen or stress-induced phosphorylation of the transcription factors CREB1 and ATF1 and for the regulation of the transcription factor RELA, and that contributes to gene activation by histone phosphorylation and functions in the regulation of inflammatory genes. Phosphorylates CREB1 and ATF1 in response to mitogenic or stress stimuli such as UV-C irradiation, epidermal growth factor (EGF) and anisomycin. Plays an essential role in the control of RELA transcriptional activity in response to TNF. Phosphorylates 'Ser-10' of histone H3 in response to mitogenics, stress stimuli and EGF, which results in the transcriptional activation of several immediate early genes, including proto-oncogenes c-fos/FOS and c-jun/JUN. May also phosphorylate 'Ser-28' of histone H3. Mediates the mitogen- and stress-induced phosphorylation of high mobility group protein 1 (HMGN1/HMG14). In lipopolysaccharide-stimulated primary macrophages, acts downstream of the Toll-like receptor TLR4 to limit the production of pro-inflammatory cytokines. Functions probably by inducing transcription of the MAP kinase phosphatase DUSP1 and the anti-inflammatory cytokine interleukin 10 (IL10), via CREB1 and ATF1 transcription factors. In Mus musculus (Mouse), this protein is Ribosomal protein S6 kinase alpha-4 (Rps6ka4).